The chain runs to 498 residues: ATP synthase subunit beta, chloroplastic (498 aa).

172 to 179 (GGAGVGKT) serves as a coordination point for ATP.

The protein belongs to the ATPase alpha/beta chains family. In terms of assembly, F-type ATPases have 2 components, CF(1) - the catalytic core - and CF(0) - the membrane proton channel. CF(1) has five subunits: alpha(3), beta(3), gamma(1), delta(1), epsilon(1). CF(0) has four main subunits: a(1), b(1), b'(1) and c(9-12).

The protein localises to the plastid. It is found in the chloroplast thylakoid membrane. It carries out the reaction ATP + H2O + 4 H(+)(in) = ADP + phosphate + 5 H(+)(out). Its function is as follows. Produces ATP from ADP in the presence of a proton gradient across the membrane. The catalytic sites are hosted primarily by the beta subunits. This chain is ATP synthase subunit beta, chloroplastic, found in Elaeis oleifera (American oil palm).